Here is a 691-residue protein sequence, read N- to C-terminus: Dynamin-1-like protein (691 aa).

Residues 22–301 form the Dynamin-type G domain; that stretch reads IIQLPQIAVV…LMHHIRDCLP (280 aa). The segment at 32-39 is G1 motif; that stretch reads GTQSSGKS. Position 32-40 (32-40) interacts with GTP; sequence GTQSSGKSS. The G2 motif stretch occupies residues 58-60; it reads VTR. Residues 145–148 are G3 motif; the sequence is DLPG. Positions 214 to 217 are G4 motif; sequence TKLD. GTP contacts are provided by residues 214–220 and 245–248; these read TKLDLMD and NRSQ. The G5 motif stretch occupies residues 244–247; sequence VNRS. A middle domain region spans residues 343-488; that stretch reads YCNTIEGTAK…NEMVHNLVAI (146 aa). Composition is skewed to basic and acidic residues over residues 522 to 531 and 551 to 563; these read LPTSVPRDKM and KKGD…EKTK. The interval 522–573 is disordered; sequence LPTSVPRDKMAGGAQAEQEGGTGTWRGMLKKGDEGQGEEKTKLQSSIPASPQ. The GED domain occupies 599–690; sequence CEVIERLIKS…VIAEIRETHL (92 aa). Residues 609 to 623 form an important for homodimerization region; that stretch reads YFLIVRKNIQDSVPK.

It belongs to the TRAFAC class dynamin-like GTPase superfamily. Dynamin/Fzo/YdjA family. As to quaternary structure, homotetramer; dimerizes through the N-terminal GTP-middle region of one molecule binding to the GED domain of another DNM1L molecule. Oligomerizes in a GTP-dependent manner to form membrane-associated tubules with a spiral pattern.

The protein resides in the cytoplasm. It is found in the cytosol. Its subcellular location is the golgi apparatus. The protein localises to the endomembrane system. It localises to the mitochondrion outer membrane. The protein resides in the peroxisome. It is found in the membrane. Its subcellular location is the clathrin-coated pit. The protein localises to the cytoplasmic vesicle. It localises to the secretory vesicle. The protein resides in the synaptic vesicle membrane. It carries out the reaction GTP + H2O = GDP + phosphate + H(+). Its function is as follows. Functions in mitochondrial and peroxisomal division. Mediates membrane fission through oligomerization into membrane-associated tubular structures that wrap around the scission site to constrict and sever the mitochondrial membrane through a GTP hydrolysis-dependent mechanism. The specific recruitment at scission sites is mediated by membrane receptors like MFF, MIEF1 and MIEF2 for mitochondrial membranes. While the recruitment by the membrane receptors is GTP-dependent, the following hydrolysis of GTP induces the dissociation from the receptors and allows DNM1L filaments to curl into closed rings that are probably sufficient to sever a double membrane. May play a role in the circadian control of mitochondrial ATP production. This is Dynamin-1-like protein from Danio rerio (Zebrafish).